We begin with the raw amino-acid sequence, 215 residues long: Nucleoredoxin-like protein 1 (215 aa).

The region spanning 1 to 164 (MVDLFLGKVL…GAELIDRNFM (164 aa)) is the Thioredoxin; atypical domain. The segment at 190–215 (DEKKKKKKRDDDDDDDDGGGGGGPWG) is disordered.

It belongs to the nucleoredoxin family.

It is found in the cell projection. The protein localises to the cilium. Its subcellular location is the photoreceptor outer segment. In terms of biological role, plays an important role in retinal cone photoreceptor survival. May play a role in cone cell viability, slowing down cone degeneration, does not seem to play a role in degenerating rods. The protein is Nucleoredoxin-like protein 1 (nxnl1) of Danio rerio (Zebrafish).